A 576-amino-acid polypeptide reads, in one-letter code: Mitogen-activated protein kinase 15 (576 aa).

Residues 20–50 (RPSSSSSSNNHDQIQNPPTVSNPNDDEDLKK) are disordered. Polar residues predominate over residues 28 to 42 (NNHDQIQNPPTVSNP). The Protein kinase domain occupies 90-381 (YQIQEVVGKG…AEEALADPYF (292 aa)). ATP-binding positions include 96 to 104 (VGKGSYGVV) and lysine 119. Aspartate 216 functions as the Proton acceptor in the catalytic mechanism. Threonine 252 carries the post-translational modification Phosphothreonine. A TXY motif is present at residues 252–254 (TDY). Phosphotyrosine is present on tyrosine 254. The residue at position 257 (threonine 257) is a Phosphothreonine. Residues 458-535 (EENQGPGGRS…GGGYSARNLM (78 aa)) are disordered. A compositionally biased stretch (basic and acidic residues) spans 477 to 501 (LPRERVPASKNETVEERSNDIERRT). Over residues 504-520 (AVASTLDSPKASQQAEG) the composition is skewed to polar residues.

This sequence belongs to the protein kinase superfamily. CMGC Ser/Thr protein kinase family. MAP kinase subfamily. As to quaternary structure, interacts with MKK7. In terms of processing, dually phosphorylated on Thr-252 and Tyr-254, which activates the enzyme.

The enzyme catalyses L-seryl-[protein] + ATP = O-phospho-L-seryl-[protein] + ADP + H(+). The catalysed reaction is L-threonyl-[protein] + ATP = O-phospho-L-threonyl-[protein] + ADP + H(+). Its activity is regulated as follows. Activated by threonine and tyrosine phosphorylation. This is Mitogen-activated protein kinase 15 (MPK15) from Arabidopsis thaliana (Mouse-ear cress).